The chain runs to 279 residues: tRNA dimethylallyltransferase (279 aa).

ATP is bound at residue 10-17; the sequence is GPTASGKS. 12-17 is a substrate binding site; sequence TASGKS.

Belongs to the IPP transferase family. As to quaternary structure, monomer. It depends on Mg(2+) as a cofactor.

The catalysed reaction is adenosine(37) in tRNA + dimethylallyl diphosphate = N(6)-dimethylallyladenosine(37) in tRNA + diphosphate. In terms of biological role, catalyzes the transfer of a dimethylallyl group onto the adenine at position 37 in tRNAs that read codons beginning with uridine, leading to the formation of N6-(dimethylallyl)adenosine (i(6)A). This chain is tRNA dimethylallyltransferase, found in Roseobacter denitrificans (strain ATCC 33942 / OCh 114) (Erythrobacter sp. (strain OCh 114)).